A 29-amino-acid polypeptide reads, in one-letter code: Trypsin inhibitor 3 (29 aa).

3 disulfide bridges follow: Cys3/Cys20, Cys10/Cys22, and Cys16/Cys28.

It belongs to the protease inhibitor I7 (squash-type serine protease inhibitor) family.

Its subcellular location is the secreted. In terms of biological role, strongly inhibits trypsin, weakly inhibits chymotrypsin. The sequence is that of Trypsin inhibitor 3 from Cyclanthera pedata (Achocha).